The primary structure comprises 377 residues: uncharacterized protein (377 aa).

Position 32–39 (32–39) interacts with ATP; sequence GPINSGKT.

This sequence belongs to the archaeal ATPase family.

This is an uncharacterized protein from Methanocaldococcus jannaschii (strain ATCC 43067 / DSM 2661 / JAL-1 / JCM 10045 / NBRC 100440) (Methanococcus jannaschii).